The primary structure comprises 697 residues: Methionine--tRNA ligase (697 aa).

A 'HIGH' region motif is present at residues 12–22 (PYANGHFHIGH). The Zn(2+) site is built by Cys-143, Cys-146, Cys-156, and Cys-159. Residues 342–346 (KMSKS) carry the 'KMSKS' region motif. Lys-345 provides a ligand contact to ATP. A disordered region spans residues 557–577 (FEPPAEPSPQTSPAAAGAGAV). One can recognise a tRNA-binding domain in the interval 591 to 697 (DFTKIDLRLA…PGAVPGLRVR (107 aa)).

The protein belongs to the class-I aminoacyl-tRNA synthetase family. MetG type 1 subfamily. Homodimer. The cofactor is Zn(2+).

It localises to the cytoplasm. It catalyses the reaction tRNA(Met) + L-methionine + ATP = L-methionyl-tRNA(Met) + AMP + diphosphate. In terms of biological role, is required not only for elongation of protein synthesis but also for the initiation of all mRNA translation through initiator tRNA(fMet) aminoacylation. In Methylibium petroleiphilum (strain ATCC BAA-1232 / LMG 22953 / PM1), this protein is Methionine--tRNA ligase.